A 146-amino-acid polypeptide reads, in one-letter code: Hemoglobin subunit beta (146 aa).

Val-1 carries the post-translational modification N-acetylvaline. The 145-residue stretch at 2–146 (HLTDAEKAAI…VASALAHKYH (145 aa)) folds into the Globin domain. Position 63 (His-63) interacts with heme b. At Lys-82 the chain carries N6-acetyllysine. A heme b-binding site is contributed by His-92. Position 93 is an S-nitrosocysteine (Cys-93). An N6-acetyllysine modification is found at Lys-144.

It belongs to the globin family. Heterotetramer of two alpha chains and two beta chains. In terms of tissue distribution, red blood cells.

Functionally, involved in oxygen transport from the lung to the various peripheral tissues. The protein is Hemoglobin subunit beta (HBB) of Microtus xanthognathus (Yellow-cheeked vole).